Here is a 620-residue protein sequence, read N- to C-terminus: MNNFILLEEQLIKKSQQKRRTSPSNFKVRFFVLTKASLAYFEDRHGKKRTLKGSIELSRIKCVEIVKSDISIPCHYKYPFQVVHDNYLLYVFAPDRESRQRWVLALKEETRNNNSLVPKYHPNFWMDGKWRCCSQLEKLATGCAQYDPTKNASKKPLPPTPEDNRRPLWEPEETVVIALYDYQTNDPQELALRRNEEYCLLDSSEIHWWRVQDRNGHEGYVPSSYLVEKSPNNLETYEWYNKSISRDKAEKLLLDTGKEGAFMVRDSRTAGTYTVSVFTKAVVSENNPCIKHYHIKETNDNPKRYYVAEKYVFDSIPLLINYHQHNGGGLVTRLRYPVCFGRQKAPVTAGLRYGKWVIDPSELTFVQEIGSGQFGLVHLGYWLNKDKVAIKTIREGAMSEEDFIEEAEVMMKLSHPKLVQLYGVCLEQAPICLVFEFMEHGCLSDYLRTQRGLFAAETLLGMCLDVCEGMAYLEEACVIHRDLAARNCLVGENQVIKVSDFGMTRFVLDDQYTSSTGTKFPVKWASPEVFSFSRYSSKSDVWSFGVLMWEVFSEGKIPYENRSNSEVVEDISTGFRLYKPRLASTHVYQIMNHCWKERPEDRPAFSRLLRQLAEIAESGL.

The 108-residue stretch at 4–111 (FILLEEQLIK…WVLALKEETR (108 aa)) folds into the PH domain. The Btk-type zinc finger occupies 113–149 (NNSLVPKYHPNFWMDGKWRCCSQLEKLATGCAQYDPT). The Zn(2+) site is built by His121, Cys132, Cys133, and Cys143. The SH3 domain occupies 171 to 231 (PEETVVIALY…PSSYLVEKSP (61 aa)). Tyr180 bears the Phosphotyrosine; by autocatalysis mark. In terms of domain architecture, SH2 spans 239 to 338 (WYNKSISRDK…GLVTRLRYPV (100 aa)). The region spanning 363–615 (LTFVQEIGSG…SRLLRQLAEI (253 aa)) is the Protein kinase domain. Residues 369–377 (IGSGQFGLV) and Lys391 each bind ATP. The Proton acceptor role is filled by Asp482. Tyr512 is subject to Phosphotyrosine; by LCK. Ser565 carries the phosphoserine modification.

The protein belongs to the protein kinase superfamily. Tyr protein kinase family. TEC subfamily. In terms of assembly, homooligomerizes; this association negatively regulates kinase activity. Interacts with PPIA/CYPA; this interaction regulates TCR signal strength via a proline-directed conformational switch in ITK. Interacts with THEMIS. Interacts with FASLG. Interacts with VAV1; this interaction is important for VAV1 localization and TCR-induced actin polarization. Interacts with TBX21. Zn(2+) is required as a cofactor. Phosphorylated at Tyr-512 in the activation loop of the kinase domain by LCK. Subsequent autophosphorylation at Tyr-180 leads to the kinase activation. The autophosphorylated Tyr-180 lies within the substrate binding sequence of the SH3 domain. Post-translationally, ubiquitinated. As to expression, T-cell lines and natural killer cell lines.

It is found in the cytoplasm. The protein resides in the nucleus. It catalyses the reaction L-tyrosyl-[protein] + ATP = O-phospho-L-tyrosyl-[protein] + ADP + H(+). Its function is as follows. Tyrosine kinase that plays an essential role in regulation of the adaptive immune response. Regulates the development, function and differentiation of conventional T-cells and nonconventional NKT-cells. When antigen presenting cells (APC) activate T-cell receptor (TCR), a series of phosphorylation lead to the recruitment of ITK to the cell membrane, in the vicinity of the stimulated TCR receptor, where it is phosphorylated by LCK. Phosphorylation leads to ITK autophosphorylation and full activation. Once activated, phosphorylates PLCG1, leading to the activation of this lipase and subsequent cleavage of its substrates. In turn, the endoplasmic reticulum releases calcium in the cytoplasm and the nuclear activator of activated T-cells (NFAT) translocates into the nucleus to perform its transcriptional duty. Phosphorylates 2 essential adapter proteins: the linker for activation of T-cells/LAT protein and LCP2. Then, a large number of signaling molecules such as VAV1 are recruited and ultimately lead to lymphokine production, T-cell proliferation and differentiation. Required for TCR-mediated calcium response in gamma-delta T-cells, may also be involved in the modulation of the transcriptomic signature in the Vgamma2-positive subset of immature gamma-delta T-cells. Phosphorylates TBX21 at 'Tyr-530' and mediates its interaction with GATA3. This is Tyrosine-protein kinase ITK/TSK (ITK) from Homo sapiens (Human).